A 103-amino-acid polypeptide reads, in one-letter code: Nucleoid-associated protein BH0035 (103 aa).

A compositionally biased stretch (low complexity) spans 1–20; sequence MKNMGQMMKQMQKMQKQMMK. Residues 1-29 are disordered; it reads MKNMGQMMKQMQKMQKQMMKAQEELKEKT.

It belongs to the YbaB/EbfC family. In terms of assembly, homodimer.

It is found in the cytoplasm. The protein resides in the nucleoid. Binds to DNA and alters its conformation. May be involved in regulation of gene expression, nucleoid organization and DNA protection. The protein is Nucleoid-associated protein BH0035 of Halalkalibacterium halodurans (strain ATCC BAA-125 / DSM 18197 / FERM 7344 / JCM 9153 / C-125) (Bacillus halodurans).